Consider the following 163-residue polypeptide: Phosphopantetheine adenylyltransferase (163 aa).

Residue Ser-9 coordinates substrate. Residues 9–10 and His-17 contribute to the ATP site; that span reads SF. Residues Lys-41, Leu-73, and Lys-87 each contribute to the substrate site. Residues 88 to 90, Glu-98, and 124 to 130 contribute to the ATP site; these read GLR and YTYVSST.

Belongs to the bacterial CoaD family. In terms of assembly, homohexamer. It depends on Mg(2+) as a cofactor.

It localises to the cytoplasm. It carries out the reaction (R)-4'-phosphopantetheine + ATP + H(+) = 3'-dephospho-CoA + diphosphate. It functions in the pathway cofactor biosynthesis; coenzyme A biosynthesis; CoA from (R)-pantothenate: step 4/5. Its function is as follows. Reversibly transfers an adenylyl group from ATP to 4'-phosphopantetheine, yielding dephospho-CoA (dPCoA) and pyrophosphate. This is Phosphopantetheine adenylyltransferase from Fusobacterium nucleatum subsp. nucleatum (strain ATCC 25586 / DSM 15643 / BCRC 10681 / CIP 101130 / JCM 8532 / KCTC 2640 / LMG 13131 / VPI 4355).